A 1292-amino-acid polypeptide reads, in one-letter code: Calcium-transporting ATPase 2 (1292 aa).

The segment at 1 to 105 (MPTYNDDDDS…EQASSKSSTS (105 aa)) is disordered. Topologically, residues 1-236 (MPTYNDDDDS…RLMLEAFKDK (236 aa)) are cytoplasmic. The span at 23 to 41 (KPSSSQFLGVPSSNYNQRE) shows a compositional bias: polar residues. Residues 44–60 (SRSGSSTISREPSSSGT) are compositionally biased toward low complexity. The segment covering 68 to 78 (DSMKESYDKNK) has biased composition (basic and acidic residues). Residues 237-257 (VLILLSIAAVVSLALGLYQTF) traverse the membrane as a helical segment. The Vacuolar portion of the chain corresponds to 258–273 (GQPPTLDPITGKPEPR). The chain crosses the membrane as a helical span at residues 274-294 (VEWVEGVAIMAAIVIVVTVGG). At 295-448 (VNDWQKELQF…QLRLSRVADA (154 aa)) the chain is on the cytoplasmic side. The chain crosses the membrane as a helical span at residues 449-469 (IAKLGGAASALLFIVLLIEFL). The Vacuolar portion of the chain corresponds to 470 to 488 (VRLKSNDSSSKNKGQEFLQ). Residues 489–509 (ILIVSVTLLVVAVPEGLPLAV) traverse the membrane as a helical segment. The Ca(2+) site is built by valine 498 and glutamate 503. Topologically, residues 510–938 (TLALAFATNR…GRTVNDAVKK (429 aa)) are cytoplasmic. The active-site 4-aspartylphosphate intermediate is aspartate 545. Mg(2+) is bound by residues aspartate 545 and threonine 547. Residues threonine 547, glutamate 638, lysine 691, arginine 736, 807-809 (TGD), arginine 856, and lysine 862 contribute to the ATP site. Aspartate 881 contributes to the Mg(2+) binding site. ATP is bound at residue asparagine 884. Residues 939–959 (FLQFQITVNITAVFLTIISAV) form a helical membrane-spanning segment. Asparagine 947 serves as a coordination point for Ca(2+). Residues 960 to 966 (ASTDQSS) are Vacuolar-facing. A helical transmembrane segment spans residues 967–987 (VLTAVQLLWVNLIMDTLAALA). Positions 977 and 981 each coordinate Ca(2+). Residues 988-1016 (LATDPPTPEVLKRKPEKPGASLFTFDMWK) are Cytoplasmic-facing. The chain crosses the membrane as a helical span at residues 1017–1037 (MIICQSMYQLAVTLVLHFAGN). At 1038–1084 (SIFHYPSNTADMNTIVFNTFVWLQLFNEINNRRLDNKLNIFERINHN) the chain is on the vacuolar side. A helical membrane pass occupies residues 1085–1105 (FLFIAIFVIVAGIQVIIVFFG). At 1106–1115 (GAAFSVKRID) the chain is on the cytoplasmic side. The helical transmembrane segment at 1116-1136 (GKGWAISIVFGVISIPLGALI) threads the bilayer. Topologically, residues 1137-1292 (RCVPNNFLRK…ALDKKSSNVH (156 aa)) are vacuolar.

The protein belongs to the cation transport ATPase (P-type) (TC 3.A.3) family.

It is found in the vacuole membrane. The catalysed reaction is Ca(2+)(in) + ATP + H2O = Ca(2+)(out) + ADP + phosphate + H(+). In terms of biological role, this magnesium-dependent enzyme catalyzes the hydrolysis of ATP coupled with the transport of calcium. Transports the calcium to the vacuole and participates in the control of the cytosolic free calcium. This chain is Calcium-transporting ATPase 2 (pmc1), found in Schizosaccharomyces pombe (strain 972 / ATCC 24843) (Fission yeast).